The chain runs to 473 residues: Lactococcin A secretion protein LcnD-like (473 aa).

The Cytoplasmic segment spans residues 1 to 21; that stretch reads MFDKKLLESSELYDKRYRNFS. A helical transmembrane segment spans residues 22–44; it reads TLIILPLFILLVGGVIFTFFAHK. Residues 45–473 lie on the Extracellular side of the membrane; the sequence is ELTVISTGSI…FLDKIMGRTS (429 aa).

The protein belongs to the membrane fusion protein (MFP) (TC 8.A.1) family.

Its subcellular location is the cell membrane. Its function is as follows. Involved in the secretion of a lactococcin. This chain is Lactococcin A secretion protein LcnD-like (lcnD), found in Lactococcus lactis subsp. lactis (strain IL1403) (Streptococcus lactis).